The sequence spans 341 residues: tRNA N6-adenosine threonylcarbamoyltransferase (341 aa).

Positions 111 and 115 each coordinate Fe cation. Substrate contacts are provided by residues 134 to 138 (LVSGG), Asp-167, Gly-180, and Asn-276. Fe cation is bound at residue Asp-304.

It belongs to the KAE1 / TsaD family. The cofactor is Fe(2+).

It is found in the cytoplasm. The enzyme catalyses L-threonylcarbamoyladenylate + adenosine(37) in tRNA = N(6)-L-threonylcarbamoyladenosine(37) in tRNA + AMP + H(+). Functionally, required for the formation of a threonylcarbamoyl group on adenosine at position 37 (t(6)A37) in tRNAs that read codons beginning with adenine. Is involved in the transfer of the threonylcarbamoyl moiety of threonylcarbamoyl-AMP (TC-AMP) to the N6 group of A37, together with TsaE and TsaB. TsaD likely plays a direct catalytic role in this reaction. The sequence is that of tRNA N6-adenosine threonylcarbamoyltransferase from Pseudomonas fluorescens (strain Pf0-1).